The chain runs to 426 residues: 3-phosphoshikimate 1-carboxyvinyltransferase (426 aa).

K22, S23, and R27 together coordinate 3-phosphoshikimate. Position 22 (K22) interacts with phosphoenolpyruvate. 2 residues coordinate phosphoenolpyruvate: G96 and R124. S170, S171, Q172, S198, D314, N337, and K341 together coordinate 3-phosphoshikimate. Q172 contacts phosphoenolpyruvate. The active-site Proton acceptor is D314. R345, R387, and K412 together coordinate phosphoenolpyruvate.

It belongs to the EPSP synthase family. Monomer.

Its subcellular location is the cytoplasm. It catalyses the reaction 3-phosphoshikimate + phosphoenolpyruvate = 5-O-(1-carboxyvinyl)-3-phosphoshikimate + phosphate. The protein operates within metabolic intermediate biosynthesis; chorismate biosynthesis; chorismate from D-erythrose 4-phosphate and phosphoenolpyruvate: step 6/7. In terms of biological role, catalyzes the transfer of the enolpyruvyl moiety of phosphoenolpyruvate (PEP) to the 5-hydroxyl of shikimate-3-phosphate (S3P) to produce enolpyruvyl shikimate-3-phosphate and inorganic phosphate. The polypeptide is 3-phosphoshikimate 1-carboxyvinyltransferase (Shewanella pealeana (strain ATCC 700345 / ANG-SQ1)).